The following is a 280-amino-acid chain: 4-hydroxy-3-methylbut-2-enyl diphosphate reductase (280 aa).

Cys-12 contacts [4Fe-4S] cluster. 2 residues coordinate (2E)-4-hydroxy-3-methylbut-2-enyl diphosphate: His-40 and His-72. Dimethylallyl diphosphate is bound by residues His-40 and His-72. Residues His-40 and His-72 each contribute to the isopentenyl diphosphate site. Cys-94 contacts [4Fe-4S] cluster. His-122 contacts (2E)-4-hydroxy-3-methylbut-2-enyl diphosphate. His-122 lines the dimethylallyl diphosphate pocket. His-122 is a binding site for isopentenyl diphosphate. Residue Glu-124 is the Proton donor of the active site. Position 160 (Thr-160) interacts with (2E)-4-hydroxy-3-methylbut-2-enyl diphosphate. Residue Cys-188 coordinates [4Fe-4S] cluster. Ser-216, Asn-218, and Ser-260 together coordinate (2E)-4-hydroxy-3-methylbut-2-enyl diphosphate. 3 residues coordinate dimethylallyl diphosphate: Ser-216, Asn-218, and Ser-260. Isopentenyl diphosphate-binding residues include Ser-216, Asn-218, and Ser-260.

This sequence belongs to the IspH family. It depends on [4Fe-4S] cluster as a cofactor.

It catalyses the reaction isopentenyl diphosphate + 2 oxidized [2Fe-2S]-[ferredoxin] + H2O = (2E)-4-hydroxy-3-methylbut-2-enyl diphosphate + 2 reduced [2Fe-2S]-[ferredoxin] + 2 H(+). It carries out the reaction dimethylallyl diphosphate + 2 oxidized [2Fe-2S]-[ferredoxin] + H2O = (2E)-4-hydroxy-3-methylbut-2-enyl diphosphate + 2 reduced [2Fe-2S]-[ferredoxin] + 2 H(+). Its pathway is isoprenoid biosynthesis; dimethylallyl diphosphate biosynthesis; dimethylallyl diphosphate from (2E)-4-hydroxy-3-methylbutenyl diphosphate: step 1/1. It participates in isoprenoid biosynthesis; isopentenyl diphosphate biosynthesis via DXP pathway; isopentenyl diphosphate from 1-deoxy-D-xylulose 5-phosphate: step 6/6. Catalyzes the conversion of 1-hydroxy-2-methyl-2-(E)-butenyl 4-diphosphate (HMBPP) into a mixture of isopentenyl diphosphate (IPP) and dimethylallyl diphosphate (DMAPP). Acts in the terminal step of the DOXP/MEP pathway for isoprenoid precursor biosynthesis. In Trichlorobacter lovleyi (strain ATCC BAA-1151 / DSM 17278 / SZ) (Geobacter lovleyi), this protein is 4-hydroxy-3-methylbut-2-enyl diphosphate reductase.